Reading from the N-terminus, the 304-residue chain is Nucleotide-binding protein SH2124 (304 aa).

ATP is bound at residue 19–26 (GLSGAGKS). Residue 70–73 (DLRG) coordinates GTP.

This sequence belongs to the RapZ-like family.

Functionally, displays ATPase and GTPase activities. In Staphylococcus haemolyticus (strain JCSC1435), this protein is Nucleotide-binding protein SH2124.